The sequence spans 728 residues: Probable 3',5'-cyclic phosphodiesterase pde-5 (728 aa).

One can recognise a GAF domain in the interval 214–371; that stretch reads SMDAVIIKVM…HHAKLYDKIR (158 aa). Residues 390–709 form the PDEase domain; sequence CNADEVNKLK…KKWEELAEEQ (320 aa). Catalysis depends on histidine 465, which acts as the Proton donor. The a divalent metal cation site is built by histidine 469, histidine 503, aspartate 504, and aspartate 614. Positions 691-728 form a coiled coil; it reads MRERCEYNAKKWEELAEEQRKKQEALAQQNGEANETQE. The segment at 708–728 is disordered; that stretch reads EQRKKQEALAQQNGEANETQE. The span at 716–728 shows a compositional bias: polar residues; that stretch reads LAQQNGEANETQE.

Belongs to the cyclic nucleotide phosphodiesterase family. It depends on a divalent metal cation as a cofactor.

It catalyses the reaction a nucleoside 3',5'-cyclic phosphate + H2O = a nucleoside 5'-phosphate + H(+). Redundantly with pde-1, plays a role in the AFD thermosensory neurons to regulate microvilli receptive ending morphology, possibly by regulating cGMP levels. The sequence is that of Probable 3',5'-cyclic phosphodiesterase pde-5 (pde-5) from Caenorhabditis elegans.